The primary structure comprises 197 residues: Molybdenum cofactor guanylyltransferase (197 aa).

Residues 10–12 (LAG), lysine 23, aspartate 69, and aspartate 99 contribute to the GTP site. A Mg(2+)-binding site is contributed by aspartate 99.

This sequence belongs to the MobA family. Monomer. It depends on Mg(2+) as a cofactor.

The protein localises to the cytoplasm. The catalysed reaction is Mo-molybdopterin + GTP + H(+) = Mo-molybdopterin guanine dinucleotide + diphosphate. Its function is as follows. Transfers a GMP moiety from GTP to Mo-molybdopterin (Mo-MPT) cofactor (Moco or molybdenum cofactor) to form Mo-molybdopterin guanine dinucleotide (Mo-MGD) cofactor. This is Molybdenum cofactor guanylyltransferase from Serratia proteamaculans (strain 568).